A 537-amino-acid chain; its full sequence is CTP synthase (537 aa).

The segment at 1 to 268 is amidoligase domain; that stretch reads MSFKCIFLTG…STFITEKLGL (268 aa). Serine 14 lines the CTP pocket. Serine 14 serves as a coordination point for UTP. Position 15–20 (15–20) interacts with ATP; it reads SLGKGL. L-glutamine is bound at residue tyrosine 55. ATP is bound at residue aspartate 72. Mg(2+) is bound by residues aspartate 72 and glutamate 142. Residues 149–151, 188–193, and lysine 224 each bind CTP; these read DIE and KTKPTQ. UTP-binding positions include 188 to 193 and lysine 224; that span reads KTKPTQ. The region spanning 294–533 is the Glutamine amidotransferase type-1 domain; it reads RLGLVGKYVQ…IEAALLHSRN (240 aa). Residue glycine 353 coordinates L-glutamine. Cysteine 380 (nucleophile; for glutamine hydrolysis) is an active-site residue. L-glutamine-binding positions include 381–384, glutamate 404, and arginine 461; that span reads LGMQ. Residues histidine 506 and glutamate 508 contribute to the active site.

Belongs to the CTP synthase family. Homotetramer.

The enzyme catalyses UTP + L-glutamine + ATP + H2O = CTP + L-glutamate + ADP + phosphate + 2 H(+). It catalyses the reaction L-glutamine + H2O = L-glutamate + NH4(+). It carries out the reaction UTP + NH4(+) + ATP = CTP + ADP + phosphate + 2 H(+). It participates in pyrimidine metabolism; CTP biosynthesis via de novo pathway; CTP from UDP: step 2/2. Allosterically activated by GTP, when glutamine is the substrate; GTP has no effect on the reaction when ammonia is the substrate. The allosteric effector GTP functions by stabilizing the protein conformation that binds the tetrahedral intermediate(s) formed during glutamine hydrolysis. Inhibited by the product CTP, via allosteric rather than competitive inhibition. Its function is as follows. Catalyzes the ATP-dependent amination of UTP to CTP with either L-glutamine or ammonia as the source of nitrogen. Regulates intracellular CTP levels through interactions with the four ribonucleotide triphosphates. In Chlamydia abortus (strain DSM 27085 / S26/3) (Chlamydophila abortus), this protein is CTP synthase.